Consider the following 538-residue polypeptide: Importin subunit alpha-6 (538 aa).

An IBB domain is found at 1–58 (MSYKPSAKTEVRRNRYKVSVDADEGRRRREDNMVEIRKNKREENLQKKRREGFNPSMA). The segment at 1–69 (MSYKPSAKTE…QPGQDFSSSL (69 aa)) is disordered. Basic and acidic residues predominate over residues 7–46 (AKTEVRRNRYKVSVDADEGRRRREDNMVEIRKNKREENLQ). The span at 56–69 (SMASQPGQDFSSSL) shows a compositional bias: polar residues. ARM repeat units follow at residues 109–149 (NPPI…NIAS), 152–191 (SENT…NVAG), 194–234 (PKCR…NFCR), 236–275 (KPQP…YLSD), 278–317 (NEKI…NIVT), 320–360 (DIQT…NITA), 363–402 (TSQI…NATS), and 406–445 (HDQI…NILK).

The protein belongs to the importin alpha family. In terms of assembly, forms a complex with importin subunit beta-1.

The protein localises to the nucleus envelope. Functionally, binds to conventional NLS motifs and mediates nuclear protein import across the nuclear envelope. Acts as a cellular receptor for the nuclear import of the virD2 protein of Agrobacterium, but is not essential for Agrobacterium-mediated root transformation. The protein is Importin subunit alpha-6 of Arabidopsis thaliana (Mouse-ear cress).